The primary structure comprises 517 residues: Membrane-bound lytic murein transglycosylase F (517 aa).

An N-terminal signal peptide occupies residues 1 to 32; it reads MKKFKINYLLIGIVTLLLAAALWPSIPWFGKA. Positions 33–269 are non-LT domain; it reads ENRIAAIQSR…RLEEKYLGHG (237 aa). Residues 270–517 are LT domain; it reads GDFDYVDTRS…PNTLVQAPRR (248 aa). E314 is an active-site residue.

It in the N-terminal section; belongs to the bacterial solute-binding protein 3 family. The protein in the C-terminal section; belongs to the transglycosylase Slt family.

Its subcellular location is the cell outer membrane. The catalysed reaction is Exolytic cleavage of the (1-&gt;4)-beta-glycosidic linkage between N-acetylmuramic acid (MurNAc) and N-acetylglucosamine (GlcNAc) residues in peptidoglycan, from either the reducing or the non-reducing ends of the peptidoglycan chains, with concomitant formation of a 1,6-anhydrobond in the MurNAc residue.. Functionally, murein-degrading enzyme that degrades murein glycan strands and insoluble, high-molecular weight murein sacculi, with the concomitant formation of a 1,6-anhydromuramoyl product. Lytic transglycosylases (LTs) play an integral role in the metabolism of the peptidoglycan (PG) sacculus. Their lytic action creates space within the PG sacculus to allow for its expansion as well as for the insertion of various structures such as secretion systems and flagella. This Enterobacter sp. (strain 638) protein is Membrane-bound lytic murein transglycosylase F.